We begin with the raw amino-acid sequence, 258 residues long: Aspartate/glutamate leucyltransferase (258 aa).

Belongs to the R-transferase family. Bpt subfamily.

Its subcellular location is the cytoplasm. The enzyme catalyses N-terminal L-glutamyl-[protein] + L-leucyl-tRNA(Leu) = N-terminal L-leucyl-L-glutamyl-[protein] + tRNA(Leu) + H(+). The catalysed reaction is N-terminal L-aspartyl-[protein] + L-leucyl-tRNA(Leu) = N-terminal L-leucyl-L-aspartyl-[protein] + tRNA(Leu) + H(+). In terms of biological role, functions in the N-end rule pathway of protein degradation where it conjugates Leu from its aminoacyl-tRNA to the N-termini of proteins containing an N-terminal aspartate or glutamate. The polypeptide is Aspartate/glutamate leucyltransferase (Rhizobium johnstonii (strain DSM 114642 / LMG 32736 / 3841) (Rhizobium leguminosarum bv. viciae)).